Here is a 221-residue protein sequence, read N- to C-terminus: Glutathione S-transferase U25 (221 aa).

Ala-2 carries the post-translational modification N-acetylalanine. The region spanning 3–82 (DEVILLDFWP…YIDEVWPSKT (80 aa)) is the GST N-terminal domain. Residues 13–14 (SM), 39–40 (NK), 53–54 (KI), and 66–67 (ES) each bind glutathione. One can recognise a GST C-terminal domain in the interval 88–208 (DPYQRAQAKF…LPDSEKIIKF (121 aa)). Phosphothreonine is present on Thr-149.

The protein belongs to the GST superfamily. Tau family.

Its subcellular location is the cytoplasm. The protein localises to the cytosol. It catalyses the reaction RX + glutathione = an S-substituted glutathione + a halide anion + H(+). May be involved in the conjugation of reduced glutathione to a wide number of exogenous and endogenous hydrophobic electrophiles and have a detoxification role against certain herbicides. This chain is Glutathione S-transferase U25 (GSTU25), found in Arabidopsis thaliana (Mouse-ear cress).